We begin with the raw amino-acid sequence, 152 residues long: Transcriptional repressor NrdR (152 aa).

Residues 3–34 (CPACQHNGTRVLDSRPVDEGRSIRRRRECESC) fold into a zinc finger. The ATP-cone domain maps to 49–139 (LIVVKKEGIR…VYRQFKDINV (91 aa)).

The protein belongs to the NrdR family. It depends on Zn(2+) as a cofactor.

In terms of biological role, negatively regulates transcription of bacterial ribonucleotide reductase nrd genes and operons by binding to NrdR-boxes. This chain is Transcriptional repressor NrdR, found in Bacillus licheniformis (strain ATCC 14580 / DSM 13 / JCM 2505 / CCUG 7422 / NBRC 12200 / NCIMB 9375 / NCTC 10341 / NRRL NRS-1264 / Gibson 46).